The primary structure comprises 209 residues: Holliday junction branch migration complex subunit RuvA (209 aa).

The interval 1–70 (MINYLKGKTT…EDQQILYGFS (70 aa)) is domain I. Residues 71–149 (TDSERDLFRQ…QWEQAIALKT (79 aa)) form a domain II region. Residues 150–160 (PVSVGVPSREI) are flexible linker. The domain III stretch occupies residues 160-209 (ILEEVEMTLLALGYTDEEIDQAISAISQDNLLLKNPHVEEWLKSAIAWLS).

Belongs to the RuvA family. Homotetramer. Forms an RuvA(8)-RuvB(12)-Holliday junction (HJ) complex. HJ DNA is sandwiched between 2 RuvA tetramers; dsDNA enters through RuvA and exits via RuvB. An RuvB hexamer assembles on each DNA strand where it exits the tetramer. Each RuvB hexamer is contacted by two RuvA subunits (via domain III) on 2 adjacent RuvB subunits; this complex drives branch migration. In the full resolvosome a probable DNA-RuvA(4)-RuvB(12)-RuvC(2) complex forms which resolves the HJ.

The protein resides in the cytoplasm. The RuvA-RuvB-RuvC complex processes Holliday junction (HJ) DNA during genetic recombination and DNA repair, while the RuvA-RuvB complex plays an important role in the rescue of blocked DNA replication forks via replication fork reversal (RFR). RuvA specifically binds to HJ cruciform DNA, conferring on it an open structure. The RuvB hexamer acts as an ATP-dependent pump, pulling dsDNA into and through the RuvAB complex. HJ branch migration allows RuvC to scan DNA until it finds its consensus sequence, where it cleaves and resolves the cruciform DNA. The polypeptide is Holliday junction branch migration complex subunit RuvA (Gloeothece citriformis (strain PCC 7424) (Cyanothece sp. (strain PCC 7424))).